A 599-amino-acid polypeptide reads, in one-letter code: Elongation factor 4 (599 aa).

The tr-type G domain maps to 2-185; sequence KYIRNFSIIA…RIIIDIPVPQ (184 aa). GTP-binding positions include 14–19 and 132–135; these read NHGKST and NKID.

This sequence belongs to the TRAFAC class translation factor GTPase superfamily. Classic translation factor GTPase family. LepA subfamily.

Its subcellular location is the cell inner membrane. It catalyses the reaction GTP + H2O = GDP + phosphate + H(+). Required for accurate and efficient protein synthesis under certain stress conditions. May act as a fidelity factor of the translation reaction, by catalyzing a one-codon backward translocation of tRNAs on improperly translocated ribosomes. Back-translocation proceeds from a post-translocation (POST) complex to a pre-translocation (PRE) complex, thus giving elongation factor G a second chance to translocate the tRNAs correctly. Binds to ribosomes in a GTP-dependent manner. The polypeptide is Elongation factor 4 (Blochmanniella floridana).